The chain runs to 526 residues: Exodeoxyribonuclease 7 large subunit (526 aa).

The interval 499–526 (AGEDGTPSQAPKKRPARAGEPTKQGSLF) is disordered.

The protein belongs to the XseA family. Heterooligomer composed of large and small subunits.

The protein localises to the cytoplasm. The enzyme catalyses Exonucleolytic cleavage in either 5'- to 3'- or 3'- to 5'-direction to yield nucleoside 5'-phosphates.. Its function is as follows. Bidirectionally degrades single-stranded DNA into large acid-insoluble oligonucleotides, which are then degraded further into small acid-soluble oligonucleotides. This chain is Exodeoxyribonuclease 7 large subunit, found in Sinorhizobium medicae (strain WSM419) (Ensifer medicae).